Here is an 89-residue protein sequence, read N- to C-terminus: Small ribosomal subunit protein uS15 (89 aa).

The protein belongs to the universal ribosomal protein uS15 family. Part of the 30S ribosomal subunit. Forms a bridge to the 50S subunit in the 70S ribosome, contacting the 23S rRNA.

Its function is as follows. One of the primary rRNA binding proteins, it binds directly to 16S rRNA where it helps nucleate assembly of the platform of the 30S subunit by binding and bridging several RNA helices of the 16S rRNA. In terms of biological role, forms an intersubunit bridge (bridge B4) with the 23S rRNA of the 50S subunit in the ribosome. The chain is Small ribosomal subunit protein uS15 from Pseudomonas fluorescens (strain Pf0-1).